Reading from the N-terminus, the 654-residue chain is Potassium voltage-gated channel subfamily A member 4 (654 aa).

Residues 1-305 (MEVAMVSAES…LLFEYPESSS (305 aa)) are Cytoplasmic-facing. The tract at residues 24–145 (QARARERERL…EEGRFYYSEE (122 aa)) is disordered. Residues 36–50 (SRAAAAAAVAAATAA) are compositionally biased toward low complexity. Residues 81–99 (GSRRRRRQRTEKKKLHHRQ) are compositionally biased toward basic residues. A Phosphoserine modification is found at serine 122. Positions 122–137 (SEEEEDEEEEEEEEEE) are enriched in acidic residues. The helical transmembrane segment at 306–327 (PARGIAIVSVLVILISIVIFCL) threads the bilayer. Residues 328–371 (ETLPEFRDDRDLIMALSAGGHSRLLNDTSAPHLENSGHTIFNDP) are Extracellular-facing. N-linked (GlcNAc...) asparagine glycosylation is present at asparagine 353. The helical transmembrane segment at 372-393 (FFIVETVCIVWFSFEFVVRCFA) threads the bilayer. Residues 394 to 404 (CPSQALFFKNI) lie on the Cytoplasmic side of the membrane. Residues 405–425 (MNIIDIVSILPYFITLGTDLA) traverse the membrane as a helical segment. At 426-440 (QQQGGGNGQQQQAMS) the chain is on the extracellular side. A helical; Voltage-sensor membrane pass occupies residues 441–461 (FAILRIIRLVRVFRIFKLSRH). At 462 to 476 (SKGLQILGHTLRASM) the chain is on the cytoplasmic side. Residues 463-476 (KGLQILGHTLRASM) are S4-S5 linker. The helical transmembrane segment at 477–498 (RELGLLIFFLFIGVILFSSAVY) threads the bilayer. At 499-512 (FAEADEPTTHFQSI) the chain is on the extracellular side. The helical intramembrane region spans 513 to 524 (PDAFWWAVVTMT). Residues 525–530 (TVGYGD) carry the Selectivity filter motif. The stretch at 525-532 (TVGYGDMK) is an intramembrane region. Residues 533 to 539 (PITVGGK) are Extracellular-facing. The chain crosses the membrane as a helical span at residues 540 to 568 (IVGSLCAIAGVLTIALPVPVIVSNFNYFY). The Cytoplasmic portion of the chain corresponds to 569-654 (HRETENEEQT…SNAKAVETDV (86 aa)). Serine 600 carries the post-translational modification Phosphoserine; by PKA. Residues 630 to 641 (CQGKGDESETDK) are compositionally biased toward basic and acidic residues. The tract at residues 630 to 654 (CQGKGDESETDKNNCSNAKAVETDV) is disordered. The short motif at 652-654 (TDV) is the PDZ-binding element.

This sequence belongs to the potassium channel family. A (Shaker) (TC 1.A.1.2) subfamily. Kv1.4/KCNA4 sub-subfamily. In terms of assembly, homotetramer and heterotetramer of potassium channel proteins. Interacts with KCNAB1 and KCNAB2. Interacts with DLG1, DLG2 and DLG4 via their PDZ domains. Interacts with SIGMAR1. Detected in a complex with KCNA1. Interacts with KCNA2. Part of a complex containing KCNA1, KCNAB1 and LGI1. Interacts (via cytoplasmic N-terminal domain) with KCNRG. Expressed in the brain, lens and retina.

Its subcellular location is the cell membrane. It is found in the cell projection. It localises to the axon. It catalyses the reaction K(+)(in) = K(+)(out). Its function is as follows. Voltage-gated potassium channel that mediates transmembrane potassium transport in excitable membranes. Forms tetrameric potassium-selective channels through which potassium ions pass in accordance with their electrochemical gradient. The channel alternates between opened and closed conformations in response to the voltage difference across the membrane. Can form functional homotetrameric channels and heterotetrameric channels that contain variable proportions of KCNA1, KCNA2, KCNA4, KCNA5, and possibly other family members as well; channel properties depend on the type of alpha subunits that are part of the channel. Channel properties are modulated by cytoplasmic beta subunits that regulate the subcellular location of the alpha subunits and promote rapid inactivation. In vivo, membranes probably contain a mixture of heteromeric potassium channel complexes, making it difficult to assign currents observed in intact tissues to any particular potassium channel family member. Homotetrameric KCNA4 forms a potassium channel that opens in response to membrane depolarization, followed by rapid spontaneous channel closure. Likewise, a heterotetrameric channel formed by KCNA1 and KCNA4 shows rapid inactivation. The polypeptide is Potassium voltage-gated channel subfamily A member 4 (Kcna4) (Mus musculus (Mouse)).